Reading from the N-terminus, the 1296-residue chain is Nuclear factor related to kappa-B-binding protein (1296 aa).

Residues 39–156 (PEDLLEDPEI…LKQILASRSD (118 aa)) enclose the DEUBAD domain. Disordered stretches follow at residues 165–186 (GPAL…EREW) and 204–232 (GDTA…PAVP). Low complexity predominate over residues 216–232 (SSWLPSSPARSPSPAVP). A phosphoserine mark is found at S228 and S298. K327 participates in a covalent cross-link: Glycyl lysine isopeptide (Lys-Gly) (interchain with G-Cter in SUMO2). Residue S351 is modified to Phosphoserine. Positions 370 to 495 (LGINEISSSF…FCKENEDSSD (126 aa)) are winged-helix like domain. Residue K469 forms a Glycyl lysine isopeptide (Lys-Gly) (interchain with G-Cter in SUMO2) linkage. K488 is covalently cross-linked (Glycyl lysine isopeptide (Lys-Gly) (interchain with G-Cter in SUMO1); alternate). A Glycyl lysine isopeptide (Lys-Gly) (interchain with G-Cter in SUMO2); alternate cross-link involves residue K488. Disordered regions lie at residues 663–758 (QAQA…SSGV) and 1015–1036 (HAAD…PAGT). Over residues 700 to 713 (PSEQSQMSLSDSSM) the composition is skewed to low complexity. Residues 726–737 (PALPTPISPPPV) show a composition bias toward pro residues. Polar residues predominate over residues 741 to 758 (NRSGSSTVSEPAQSSSGV). Over residues 1016 to 1034 (AADSPAKAPSASVPSSAPA) the composition is skewed to low complexity. S1019 carries the phosphoserine modification. The residue at position 1234 (K1234) is an N6-acetyllysine. S1288 carries the post-translational modification Phosphoserine.

Belongs to the NFRKB family. In terms of assembly, component of the chromatin remodeling INO80 complex; specifically part of a complex module associated with the N-terminus of INO80. Interacts with UCHL5.

It localises to the nucleus. Binds to the DNA consensus sequence 5'-GGGGAATCTCC-3'. Functionally, putative regulatory component of the chromatin remodeling INO80 complex which is involved in transcriptional regulation, DNA replication and probably DNA repair. Modulates the deubiquitinase activity of UCHL5 in the INO80 complex. This chain is Nuclear factor related to kappa-B-binding protein (Nfrkb), found in Mus musculus (Mouse).